Here is a 239-residue protein sequence, read N- to C-terminus: Transcriptional regulatory protein BtsR (239 aa).

The Response regulatory domain occupies 3–116 (KVLIVDDEPL…RLEKTLHRLR (114 aa)). 4-aspartylphosphate is present on Asp54. The 103-residue stretch at 137-239 (IPCTGHSRIY…LKSLKEAIGL (103 aa)) folds into the HTH LytTR-type domain.

In terms of processing, phosphorylated by BtsS.

In terms of biological role, member of the two-component regulatory system BtsS/BtsR. BtsR regulates expression of btsT by binding to its promoter region. This is Transcriptional regulatory protein BtsR from Salmonella typhi.